The chain runs to 134 residues: Phospholipase A2 (134 aa).

Residues tryptophan 8, glycine 10, and glycine 12 each contribute to the Ca(2+) site. 5 disulfides stabilise this stretch: cysteine 9–cysteine 31, cysteine 30–cysteine 70, cysteine 37–cysteine 63, cysteine 61–cysteine 95, and cysteine 105–cysteine 113. An N-linked (GlcNAc...) asparagine glycan is attached at asparagine 13. Histidine 34 is an active-site residue. Aspartate 35 contributes to the Ca(2+) binding site. The active site involves aspartate 64.

Belongs to the phospholipase A2 family. Group III subfamily. Ca(2+) serves as cofactor. In terms of tissue distribution, expressed by the venom gland.

It is found in the secreted. It catalyses the reaction a 1,2-diacyl-sn-glycero-3-phosphocholine + H2O = a 1-acyl-sn-glycero-3-phosphocholine + a fatty acid + H(+). Functionally, PLA2 catalyzes the calcium-dependent hydrolysis of the 2-acyl groups in 3-sn-phosphoglycerides. In Apis cerana cerana (Oriental honeybee), this protein is Phospholipase A2.